A 670-amino-acid polypeptide reads, in one-letter code: UvrABC system protein B (670 aa).

The region spanning 26–183 (NGLKSGLAFQ…QRLVDLQYNR (158 aa)) is the Helicase ATP-binding domain. 39-46 (GVTGSGKT) serves as a coordination point for ATP. Residues 92-115 (YYDYYQPEAYVPSSDSFIEKDAAI) carry the Beta-hairpin motif. The Helicase C-terminal domain maps to 431–597 (QVDDLLSEIN…GLSKQVNDVM (167 aa)). Positions 630–665 (LKQIALSEKQMFACAKNLEFEKAALFRDEVTKLHEQ) constitute a UVR domain.

The protein belongs to the UvrB family. Forms a heterotetramer with UvrA during the search for lesions. Interacts with UvrC in an incision complex.

The protein localises to the cytoplasm. In terms of biological role, the UvrABC repair system catalyzes the recognition and processing of DNA lesions. A damage recognition complex composed of 2 UvrA and 2 UvrB subunits scans DNA for abnormalities. Upon binding of the UvrA(2)B(2) complex to a putative damaged site, the DNA wraps around one UvrB monomer. DNA wrap is dependent on ATP binding by UvrB and probably causes local melting of the DNA helix, facilitating insertion of UvrB beta-hairpin between the DNA strands. Then UvrB probes one DNA strand for the presence of a lesion. If a lesion is found the UvrA subunits dissociate and the UvrB-DNA preincision complex is formed. This complex is subsequently bound by UvrC and the second UvrB is released. If no lesion is found, the DNA wraps around the other UvrB subunit that will check the other stand for damage. This is UvrABC system protein B from Psychromonas ingrahamii (strain DSM 17664 / CCUG 51855 / 37).